Here is a 498-residue protein sequence, read N- to C-terminus: Phosphoethanolamine N-methyltransferase 1 (498 aa).

S-adenosyl-L-homocysteine-binding residues include glycine 68, arginine 73, aspartate 89, aspartate 115, valine 116, and asparagine 134. Serine 167, serine 172, glycine 173, arginine 177, and tyrosine 184 together coordinate phosphocholine. N-methylethanolamine phosphate-binding positions include glutamine 253 to tyrosine 254 and tyrosine 262. Residue tyrosine 262 coordinates phosphocholine. S-adenosyl-L-homocysteine contacts are provided by valine 271, serine 272, glycine 298, aspartate 320, aspartate 346, cysteine 347, and arginine 363. Tyrosine 394, tyrosine 408, arginine 412, tyrosine 414, and lysine 480 together coordinate phosphocholine. N-methylethanolamine phosphate-binding positions include tyrosine 394, tyrosine 408, arginine 412 to tyrosine 414, and lysine 480.

This sequence belongs to the class I-like SAM-binding methyltransferase superfamily. PEAMT family.

It catalyses the reaction phosphoethanolamine + S-adenosyl-L-methionine = N-methylethanolamine phosphate + S-adenosyl-L-homocysteine + H(+). The enzyme catalyses N-methylethanolamine phosphate + S-adenosyl-L-methionine = N,N-dimethylethanolamine phosphate + S-adenosyl-L-homocysteine + H(+). It carries out the reaction N,N-dimethylethanolamine phosphate + S-adenosyl-L-methionine = phosphocholine + S-adenosyl-L-homocysteine + H(+). Its pathway is phospholipid metabolism; phosphatidylcholine biosynthesis; phosphocholine from phosphoethanolamine: step 1/1. Its activity is regulated as follows. Inhibited by phosphatidic acid. Functionally, involved in phosphocholine biosynthesis. Catalyzes the N-methylation of phosphoethanolamine, phosphomonomethylethanolamine and phosphodimethylethanolamine, the three methylation steps required to convert phosphoethanolamine to phosphocholine (PC). The polypeptide is Phosphoethanolamine N-methyltransferase 1 (Triticum aestivum (Wheat)).